The following is a 396-amino-acid chain: 8-amino-7-oxononanoate synthase (396 aa).

Arg-21 lines the substrate pocket. Position 112-113 (112-113 (GY)) interacts with pyridoxal 5'-phosphate. A substrate-binding site is contributed by His-137. Residues Ser-183, His-211, and Thr-239 each coordinate pyridoxal 5'-phosphate. Position 242 is an N6-(pyridoxal phosphate)lysine (Lys-242). Thr-358 is a binding site for substrate.

This sequence belongs to the class-II pyridoxal-phosphate-dependent aminotransferase family. BioF subfamily. As to quaternary structure, homodimer. Requires pyridoxal 5'-phosphate as cofactor.

The catalysed reaction is 6-carboxyhexanoyl-[ACP] + L-alanine + H(+) = (8S)-8-amino-7-oxononanoate + holo-[ACP] + CO2. Its pathway is cofactor biosynthesis; biotin biosynthesis. Its function is as follows. Catalyzes the decarboxylative condensation of pimeloyl-[acyl-carrier protein] and L-alanine to produce 8-amino-7-oxononanoate (AON), [acyl-carrier protein], and carbon dioxide. The sequence is that of 8-amino-7-oxononanoate synthase from Bordetella petrii (strain ATCC BAA-461 / DSM 12804 / CCUG 43448).